Here is a 75-residue protein sequence, read N- to C-terminus: Sec-independent protein translocase protein TatA (75 aa).

A helical transmembrane segment spans residues 1 to 21; the sequence is MGSFSIWHWLVVLAIVLLVFG. Residues 40 to 75 form a disordered region; the sequence is KKGMRDEDKPNAQLGDESRSQDASRTAQDEHDRTPR.

The protein belongs to the TatA/E family. In terms of assembly, the Tat system comprises two distinct complexes: a TatABC complex, containing multiple copies of TatA, TatB and TatC subunits, and a separate TatA complex, containing only TatA subunits. Substrates initially bind to the TatABC complex, which probably triggers association of the separate TatA complex to form the active translocon.

The protein localises to the cell inner membrane. Functionally, part of the twin-arginine translocation (Tat) system that transports large folded proteins containing a characteristic twin-arginine motif in their signal peptide across membranes. TatA could form the protein-conducting channel of the Tat system. This chain is Sec-independent protein translocase protein TatA, found in Stenotrophomonas maltophilia (strain R551-3).